Here is an 84-residue protein sequence, read N- to C-terminus: Turripeptide IX-01 (84 aa).

The N-terminal stretch at 1 to 21 is a signal peptide; that stretch reads MGFYMLLTVALLLTSFMSVEA. The propeptide occupies 22 to 39; it reads TPVDQAERSAMKESGLAH. Intrachain disulfides connect cysteine 48-cysteine 70, cysteine 55-cysteine 74, and cysteine 60-cysteine 81.

Expressed by the venom duct.

Its subcellular location is the secreted. The chain is Turripeptide IX-01 from Gemmula speciosa (Splendid gem-turris).